A 658-amino-acid polypeptide reads, in one-letter code: CXXC-type zinc finger protein 1 (658 aa).

M1 carries the post-translational modification N-acetylmethionine. The segment covering 1–14 (MEGDASDPEPPDAG) has biased composition (acidic residues). The segment at 1-20 (MEGDASDPEPPDAGEDSKSE) is disordered. 2 positions are modified to phosphoserine: S6 and S19. Residues 28-76 (YCICRKPDINCFMIGCDNCNEWFHGDCIRITEKMAKAIREWYCRECREK) form a PHD-type zinc finger. The tract at residues 84–164 (YRHKKSRERD…HQQQQQQQQI (81 aa)) is disordered. A compositionally biased stretch (basic and acidic residues) spans 90–120 (RERDSSERDGSEPRDEGGGRKRPAPDPDLQR). Over residues 153 to 163 (QHHQQQQQQQQ) the composition is skewed to low complexity. The segment at 162–211 (QQIKRSARMCGECEACRRTEDCGHCDFCRDMKKFGGPNKIRQKCRLRQCQ) adopts a CXXC-type zinc-finger fold. C171, C174, C177, C183, C186, C189, C205, and C210 together coordinate Zn(2+). Disordered regions lie at residues 221–285 (FPSS…SDED) and 327–373 (VKVK…DPAS). Residue S226 is modified to Phosphoserine. Phosphothreonine is present on T229. A Glycyl lysine isopeptide (Lys-Gly) (interchain with G-Cter in SUMO2) cross-link involves residue K252. The span at 327-336 (VKVKHVKRRE) shows a compositional bias: basic residues. The segment covering 337-347 (KKSEKKKDERY) has biased composition (basic and acidic residues). Residues 348–360 (KRHRQKQKHKDKW) show a composition bias toward basic residues. Over residues 361 to 370 (KHPERADAKD) the composition is skewed to basic and acidic residues. The stretch at 428-470 (GKKLLERIRREQQSARTRLQEMERRFHELEAIILRAKQQAVRE) forms a coiled coil.

Component of the SET1 complex, at least composed of the catalytic subunit (SETD1A or SETD1B), WDR5, WDR82, RBBP5, ASH2L/ASH2, CXXC1/CFP1, HCFC1 and DPY30. Interacts with SETD1A. Interacts with ZNF335. Interacts with PRDM9; this interaction does not link PRDM9-activated recombination hotspot sites with DSB machinery and is not required for the hotspot recognition pathway. Interacts with histone H3K4me3. In terms of processing, may be regulated by proteolysis.

The protein localises to the nucleus speckle. The protein resides in the nucleus. Functionally, transcriptional activator that exhibits a unique DNA binding specificity for CpG unmethylated motifs with a preference for CpGG. This Bos taurus (Bovine) protein is CXXC-type zinc finger protein 1 (CXXC1).